Here is a 404-residue protein sequence, read N- to C-terminus: MEQPSIYNYSWVDFVFSVIGVFTFFVDWGADVWVATEFYRRGDFFWFGVLVGLMVLSSVLVQMFSWFWLQYDRGLPDLQTGGGTVLFGDRLRLSCLLHVLQLGFLCRHISAIRQGFRVWWRKEEGSEYAFYLSHDLSMLRLIETFSESAPQLTLMIYVMLRTQRARAVQFVSVAASTTSIAWMVVDYHRCLRSFLPDKARQGWASSLIYFLWNLLLIAPRVAALALFASVVGGYLGLHLLLLWLVFVTWAWLQRTHFMDSPGGEWLYRATVGIIWYFSWFNVAEGRTRGRSAIYHAFITADGAILLVTWWCCREPVQAEPYALALLLTLLLSYLLGLLFKSLYYCCFHPTLWRPPAREPGLPDDLPDADVTFRHLSIQDGAPASRPLNRRMALHAADFYSARTS.

A run of 8 helical transmembrane segments spans residues 14–34 (FVFS…DVWV), 44–64 (FFWF…VQMF), 167–187 (AVQF…VVDY), 206–226 (SLIY…ALAL), 227–247 (FASV…LVFV), 263–283 (GEWL…FNVA), 292–312 (AIYH…WWCC), and 319–339 (EPYA…GLLF).

The protein belongs to the XK family.

The protein resides in the cell membrane. It catalyses the reaction a 1,2-diacyl-sn-glycero-3-phospho-L-serine(in) = a 1,2-diacyl-sn-glycero-3-phospho-L-serine(out). In terms of biological role, phospholipid scramblase that promotes phosphatidylserine exposure on apoptotic cell surface, possibly by mediating phospholipid scrambling. Phosphatidylserine is a specific marker only present at the surface of apoptotic cells and acts as a specific signal for engulfment. In Tetraodon nigroviridis (Spotted green pufferfish), this protein is XK-related protein 8.